Consider the following 46-residue polypeptide: Large ribosomal subunit protein bL36A (46 aa).

It belongs to the bacterial ribosomal protein bL36 family.

This Sodalis glossinidius (strain morsitans) protein is Large ribosomal subunit protein bL36A.